A 307-amino-acid polypeptide reads, in one-letter code: Major pollen allergen Lol p 5a (307 aa).

Residues 1-25 (MAVQKYTVALFLAVALVAGPAASYA) form the signal peptide.

Belongs to the Poa p IX/Phl p VI allergen family. As to expression, pollen, starch granules.

The protein is Major pollen allergen Lol p 5a (LOLPIB) of Lolium perenne (Perennial ryegrass).